The following is a 267-amino-acid chain: Hydroxynaphthalene reductase-like protein Arp2 (267 aa).

4 residues coordinate NADP(+): I25, N45, D71, and N98. Residues S147 and S148 each act as proton donor in the active site. 4 residues coordinate NADP(+): Y162, K166, V195, and T197. Y162 acts as the Proton acceptor in catalysis. Residue K166 is the Lowers pKa of active site Tyr of the active site.

This sequence belongs to the short-chain dehydrogenases/reductases (SDR) family.

Hydroxynaphthalene reductase-like protein; part of the Pks2 gene cluster that mediates the formation of infectious structures (appressoria), enabling these fungi to kill insects faster. The product of the Pks2 gene cluster is different from the one of Pks1 and has still not been identified. The polypeptide is Hydroxynaphthalene reductase-like protein Arp2 (Metarhizium acridum (strain CQMa 102)).